The following is a 689-amino-acid chain: Glycine--tRNA ligase beta subunit (689 aa).

The protein belongs to the class-II aminoacyl-tRNA synthetase family. In terms of assembly, tetramer of two alpha and two beta subunits.

The protein localises to the cytoplasm. The catalysed reaction is tRNA(Gly) + glycine + ATP = glycyl-tRNA(Gly) + AMP + diphosphate. The polypeptide is Glycine--tRNA ligase beta subunit (Acinetobacter baumannii (strain AB307-0294)).